Consider the following 64-residue polypeptide: Small ribosomal subunit protein bS21 (64 aa).

Belongs to the bacterial ribosomal protein bS21 family.

This Flavobacterium johnsoniae (strain ATCC 17061 / DSM 2064 / JCM 8514 / BCRC 14874 / CCUG 350202 / NBRC 14942 / NCIMB 11054 / UW101) (Cytophaga johnsonae) protein is Small ribosomal subunit protein bS21.